The following is a 321-amino-acid chain: MSGEQTEQISKDKAVAAEQARKEQIAEGKKAAESPEVERRKKNIAEIAKLNEKAREAKKQATEQEETTTSLLERFNLLKEWHLNQQVNNKVKNPAMESETEPALADELKPDMSNLFARPTVTDLQKMKWNAESNKMATADDMAFIEAEFQSLGVPKENLAKVMWTLTRYCVGASSSQYLDPKGEEEKLCGGVTRAALIACIKKRSTLRKVCRLYAPIVWNYMLVNNVPPEDWQSKGYTEETKFAAFDTFDFVMNPAAIQPLEGLIRSPTKAEIIANETHKRIALDRNANNERFANLGSEITGGKFGCRVGTKWRESKCDNG.

Residues Met1 to Asn43 form a disordered region. Basic and acidic residues predominate over residues Ile9–Arg39.

It belongs to the potexviruses coat protein family.

The protein localises to the virion. Its function is as follows. Required for genome encapsidation. Forms ribonucleoprotein complexes along with TGB1 helicase and viral RNA. This is Capsid protein from Poplar mosaic virus (isolate ATCC Pv275) (PMV).